Here is a 324-residue protein sequence, read N- to C-terminus: COP9 signalosome complex subunit 6 (324 aa).

The region spanning 38-171 (VALHPLVILN…VSVFESVIDI (134 aa)) is the MPN domain.

It belongs to the peptidase M67A family. CSN6 subfamily. In terms of assembly, component of the CSN complex, composed of COPS1/GPS1, COPS2, COPS3, COPS4, COPS5, COPS6, COPS7 (COPS7A or COPS7B), COPS8 and COPS9. In the complex, it probably interacts directly with COPS2, COPS4, COPS5, COPS7 (COPS7A or COPS7B) and COPS9. Interacts with the translation initiation factor EIF3S6. Interacts weakly with RBX1. Directly interacts with COP1 and 14-3-3 protein sigma/SFN. Interacts with ERCC6.

The protein localises to the cytoplasm. It localises to the nucleus. Its function is as follows. Component of the COP9 signalosome complex (CSN), a complex involved in various cellular and developmental processes. The CSN complex is an essential regulator of the ubiquitin (Ubl) conjugation pathway by mediating the deneddylation of the cullin subunits of SCF-type E3 ligase complexes, leading to decrease the Ubl ligase activity of SCF-type complexes such as SCF, CSA or DDB2. The complex is also involved in phosphorylation of p53/TP53, c-jun/JUN, IkappaBalpha/NFKBIA, ITPK1 and IRF8, possibly via its association with CK2 and PKD kinases. CSN-dependent phosphorylation of TP53 and JUN promotes and protects degradation by the Ubl system, respectively. Has some glucocorticoid receptor-responsive activity. Stabilizes COP1 through reducing COP1 auto-ubiquitination and decelerating COP1 turnover rate, hence regulates the ubiquitination of COP1 targets, including SFN. The polypeptide is COP9 signalosome complex subunit 6 (COPS6) (Bos taurus (Bovine)).